The primary structure comprises 1104 residues: Transposon Ty4-P Gag-Pol polyprotein (1104 aa).

A coiled-coil region spans residues 48-112 (VKQYQRNLNR…VEKIQLLETN (65 aa)). Residues 381-501 (QQQLKSSAKE…KTKMVLSRKY (121 aa)) form a ty4 protease region. Residue Asp-414 is the For protease activity; shared with dimeric partner of the active site. Positions 539–599 (AIKPTSSPGF…EPNEFWCQTC (61 aa)) are integrase-type zinc finger-like. In terms of domain architecture, Integrase catalytic spans 619 to 786 (TDHEPGSSWC…LPLKAISRQP (168 aa)). Residues Asp-630 and Asp-695 each contribute to the Mg(2+) site.

In terms of assembly, the protease is a homodimer, whose active site consists of two apposed aspartic acid residues. Proteolytically processed into capsid protein (CA), Ty4 protease (PR), integrase (IN) and reverse transcriptase/ribonuclease H (RT) proteins. Initially, virus-like particles (VLPs) are composed of the structural unprocessed proteins Gag and Gag-Pol, and also contain the host initiator methionine tRNA (tRNA(i)-Met) which serves as a primer for minus-strand DNA synthesis, and a dimer of genomic Ty RNA. Processing of the polyproteins occurs within the particle and proceeds by an ordered pathway, called maturation. First, the protease (PR) is released by autocatalytic cleavage of the Gag-Pol polyprotein, and this cleavage is a prerequisite for subsequent processing at the remaining sites to release the mature structural and catalytic proteins. Maturation takes place prior to the RT reaction and is required to produce transposition-competent VLPs.

The protein resides in the cytoplasm. It is found in the nucleus. It catalyses the reaction DNA(n) + a 2'-deoxyribonucleoside 5'-triphosphate = DNA(n+1) + diphosphate. It carries out the reaction Endonucleolytic cleavage to 5'-phosphomonoester.. In terms of biological role, capsid protein (CA) is the structural component of the virus-like particle (VLP), forming the shell that encapsulates the retrotransposons dimeric RNA genome. The aspartyl protease (PR) mediates the proteolytic cleavages of the Gag and Gag-Pol polyproteins after assembly of the VLP. Its function is as follows. Reverse transcriptase/ribonuclease H (RT) is a multifunctional enzyme that catalyzes the conversion of the retro-elements RNA genome into dsDNA within the VLP. The enzyme displays a DNA polymerase activity that can copy either DNA or RNA templates, and a ribonuclease H (RNase H) activity that cleaves the RNA strand of RNA-DNA heteroduplexes during plus-strand synthesis and hydrolyzes RNA primers. The conversion leads to a linear dsDNA copy of the retrotransposon that includes long terminal repeats (LTRs) at both ends. Functionally, integrase (IN) targets the VLP to the nucleus, where a subparticle preintegration complex (PIC) containing at least integrase and the newly synthesized dsDNA copy of the retrotransposon must transit the nuclear membrane. Once in the nucleus, integrase performs the integration of the dsDNA into the host genome. This Saccharomyces cerevisiae (strain ATCC 204508 / S288c) (Baker's yeast) protein is Transposon Ty4-P Gag-Pol polyprotein (TY4B-P).